Reading from the N-terminus, the 172-residue chain is Translation initiation factor IF-3 (172 aa).

This sequence belongs to the IF-3 family. In terms of assembly, monomer.

Its subcellular location is the cytoplasm. In terms of biological role, IF-3 binds to the 30S ribosomal subunit and shifts the equilibrium between 70S ribosomes and their 50S and 30S subunits in favor of the free subunits, thus enhancing the availability of 30S subunits on which protein synthesis initiation begins. This chain is Translation initiation factor IF-3, found in Thermotoga maritima (strain ATCC 43589 / DSM 3109 / JCM 10099 / NBRC 100826 / MSB8).